The following is a 348-amino-acid chain: S-adenosylmethionine:tRNA ribosyltransferase-isomerase (348 aa).

Belongs to the QueA family. Monomer.

The protein resides in the cytoplasm. The enzyme catalyses 7-aminomethyl-7-carbaguanosine(34) in tRNA + S-adenosyl-L-methionine = epoxyqueuosine(34) in tRNA + adenine + L-methionine + 2 H(+). It participates in tRNA modification; tRNA-queuosine biosynthesis. In terms of biological role, transfers and isomerizes the ribose moiety from AdoMet to the 7-aminomethyl group of 7-deazaguanine (preQ1-tRNA) to give epoxyqueuosine (oQ-tRNA). In Tolumonas auensis (strain DSM 9187 / NBRC 110442 / TA 4), this protein is S-adenosylmethionine:tRNA ribosyltransferase-isomerase.